We begin with the raw amino-acid sequence, 319 residues long: CBBY-like protein (319 aa).

The N-terminal 65 residues, Met1–Thr65, are a transit peptide targeting the chloroplast. Catalysis depends on Asp82, which acts as the Nucleophile. Mg(2+) contacts are provided by Asp82 and Asp84. Asp82 is a substrate binding site. Catalysis depends on Asp84, which acts as the Proton donor. Residues Glu91, Gly125 to Arg129, His158 to Lys161, and Ser198 to Ala204 contribute to the substrate site. Asp258 serves as a coordination point for Mg(2+).

The protein belongs to the HAD-like hydrolase superfamily. DOG/GPP family. Requires Mg(2+) as cofactor.

Its subcellular location is the plastid. It is found in the chloroplast. It carries out the reaction D-xylulose 1,5-bisphosphate + H2O = D-xylulose 5-phosphate + phosphate. Highly selective xylulose-1,5-bisphosphate (XuBP) phosphatase. Also shows activity towards ribulose-1,5-bisphosphate (RuBP) and fructose-1,6-bisphosphate (FBP), but not towards fructose-6-phosphate (F6P) or ribulose-5-phosphate (Ru5P). Degrades xylulose-1,5-bisphosphate, a potent inhibitor of rubisco produced by the rubisco itself. The chain is CBBY-like protein from Arabidopsis thaliana (Mouse-ear cress).